Consider the following 461-residue polypeptide: Cysteine--tRNA ligase (461 aa).

Cys28 is a binding site for Zn(2+). The 'HIGH' region motif lies at 30–40; that stretch reads ITVYDLCHIGH. Zn(2+)-binding residues include Cys209, His234, and Glu238. Residues 266–270 carry the 'KMSKS' region motif; it reads KMSKS. Position 269 (Lys269) interacts with ATP.

This sequence belongs to the class-I aminoacyl-tRNA synthetase family. In terms of assembly, monomer. Zn(2+) is required as a cofactor.

Its subcellular location is the cytoplasm. The catalysed reaction is tRNA(Cys) + L-cysteine + ATP = L-cysteinyl-tRNA(Cys) + AMP + diphosphate. This is Cysteine--tRNA ligase from Escherichia coli O6:K15:H31 (strain 536 / UPEC).